A 619-amino-acid polypeptide reads, in one-letter code: MGTGKKEKSRIQRQGKVTGDPKVKGENFYRSAKKIKALNVLKEGKAIRNKEGKVVKAASYQSRDVPTAVIEPNRRWFNNTRVISQDTLTSFREAIAEKDKDPYSVLLKSNKLPMSLIRDGPKDALKKHQAKMTIESEPFSQTFGPKAQRKRPKLSFNTIGDLTEHSEKSMDTYQARLEEIKLLSGASGYGGGLADDDVQEEDFSVATAKEAIFTKGQSKRIWNELYKVIDSSDVILHVIDARDPLGTRCRHVEKYLATEAPHKHLIFVLNKIDLVPSKTAAAWIRVLQKDHPTCAMRSSIKNPFGRGSLIDLLRQFSILHKDRKQISVGLVGYPNVGKSSIINALRGKPVAKVAPIPGETKVWQYVTLMRRIYLIDCPGIVPPNQNDTPQDLLLRGVVRVENVDNPEQYIPAVLNKVKPHHMERTYELKGWKDHIHFLEMLARKGGRLLKGGEPDVDGVAKMVLNDFMRGKIPWFTPAPEKEEGETDTMEGREGRYGEMSKKRKRDEDDSAPATTPASAGEDAKEEDPENFAGFDSDSDSEVEEAAEEKGEEKSTAEDMIPLDASSDEEEDGEEEGSDVEDDEEGSDLDIEGASELEESESEAEAAPAPPPKKQRRSRK.

Positions 1–10 (MGTGKKEKSR) are enriched in basic and acidic residues. The tract at residues 1-24 (MGTGKKEKSRIQRQGKVTGDPKVK) is disordered. A CP-type G domain is found at 222–383 (WNELYKVIDS…LIDCPGIVPP (162 aa)). GTP contacts are provided by residues 332 to 339 (GYPNVGKS) and 376 to 380 (DCPGI). Residues 473-619 (PWFTPAPEKE…PPKKQRRSRK (147 aa)) are disordered. A compositionally biased stretch (basic and acidic residues) spans 489 to 500 (MEGREGRYGEMS). A compositionally biased stretch (acidic residues) spans 536 to 546 (SDSDSEVEEAA). A compositionally biased stretch (basic and acidic residues) spans 547 to 556 (EEKGEEKSTA). Residues 565–603 (SSDEEEDGEEEGSDVEDDEEGSDLDIEGASELEESESEA) show a composition bias toward acidic residues.

This sequence belongs to the TRAFAC class YlqF/YawG GTPase family. NOG2 subfamily.

The protein resides in the nucleus. It localises to the nucleolus. GTPase that associates with pre-60S ribosomal subunits in the nucleolus and is required for their nuclear export and maturation. This is Nucleolar GTP-binding protein 2 (nog-2) from Neurospora crassa (strain ATCC 24698 / 74-OR23-1A / CBS 708.71 / DSM 1257 / FGSC 987).